Reading from the N-terminus, the 227-residue chain is PKHD-type hydroxylase BURPS668_A1690 (227 aa).

The Fe2OG dioxygenase domain maps to 78–178 (KVFPPLFNRY…RVASFFWIQS (101 aa)). 3 residues coordinate Fe cation: His96, Asp98, and His159. Arg169 contributes to the 2-oxoglutarate binding site.

The cofactor is Fe(2+). L-ascorbate is required as a cofactor.

This is PKHD-type hydroxylase BURPS668_A1690 from Burkholderia pseudomallei (strain 668).